The primary structure comprises 195 residues: Large ribosomal subunit protein eL18 (195 aa).

A Glycyl lysine isopeptide (Lys-Gly) (interchain with G-Cter in SUMO2) cross-link involves residue K126. Position 137 is a phosphoserine (S137). Residues 158-195 (HFGKAPGTPHSHTKPYVRSKGRKFERARGRRASRGYKN) form a disordered region. The residue at position 165 (T165) is a Phosphothreonine. 2 stretches are compositionally biased toward basic residues: residues 168 to 178 (SHTKPYVRSKG) and 185 to 195 (RGRRASRGYKN). A Glycyl lysine isopeptide (Lys-Gly) (interchain with G-Cter in SUMO2) cross-link involves residue K171.

Belongs to the eukaryotic ribosomal protein eL18 family. Component of the large ribosomal subunit.

It localises to the cytoplasm. It is found in the cytosol. The protein resides in the rough endoplasmic reticulum. Functionally, component of the large ribosomal subunit. This Sus scrofa (Pig) protein is Large ribosomal subunit protein eL18 (RPL18).